Consider the following 412-residue polypeptide: Phosphate-repressible acid phosphatase (412 aa).

An N-terminal signal peptide occupies residues 1 to 19; the sequence is MLTKQTLLAFVGALALATG. N-linked (GlcNAc...) asparagine glycans are attached at residues N74, N121, N186, and N208. Residue D215 is the Proton donor of the active site. Residues N217, N332, and N343 are each glycosylated (N-linked (GlcNAc...) asparagine).

Post-translationally, the N-terminus is blocked.

The protein localises to the secreted. It carries out the reaction a phosphate monoester + H2O = an alcohol + phosphate. In Penicillium chrysogenum (Penicillium notatum), this protein is Phosphate-repressible acid phosphatase (PHOA).